Here is a 197-residue protein sequence, read N- to C-terminus: Glycerol-3-phosphate acyltransferase (197 aa).

Helical transmembrane passes span 1 to 21 (MNIL…GFLI), 50 to 70 (WPAL…VKIA), 77 to 97 (GLIE…PIWL), 111 to 131 (MFLA…LIVL), 136 to 156 (FVSL…FFYL), and 157 to 177 (GNYM…VIWK).

This sequence belongs to the PlsY family. Probably interacts with PlsX.

It is found in the cell inner membrane. The enzyme catalyses an acyl phosphate + sn-glycerol 3-phosphate = a 1-acyl-sn-glycero-3-phosphate + phosphate. It participates in lipid metabolism; phospholipid metabolism. Catalyzes the transfer of an acyl group from acyl-phosphate (acyl-PO(4)) to glycerol-3-phosphate (G3P) to form lysophosphatidic acid (LPA). This enzyme utilizes acyl-phosphate as fatty acyl donor, but not acyl-CoA or acyl-ACP. This Prochlorococcus marinus (strain MIT 9312) protein is Glycerol-3-phosphate acyltransferase.